Consider the following 492-residue polypeptide: Ribose import ATP-binding protein RbsA (492 aa).

ABC transporter domains follow at residues 3 to 239 (IDMR…VGRK) and 238 to 492 (RKLE…TGGK). An ATP-binding site is contributed by 35–42 (GENGAGKS).

This sequence belongs to the ABC transporter superfamily. Ribose importer (TC 3.A.1.2.1) family. In terms of assembly, the complex is composed of an ATP-binding protein (RbsA), two transmembrane proteins (RbsC) and a solute-binding protein (RbsB).

Its subcellular location is the cell membrane. It carries out the reaction D-ribose(out) + ATP + H2O = D-ribose(in) + ADP + phosphate + H(+). Functionally, part of the ABC transporter complex RbsABC involved in ribose import. Responsible for energy coupling to the transport system. In Streptococcus agalactiae serotype III (strain NEM316), this protein is Ribose import ATP-binding protein RbsA.